The following is a 432-amino-acid chain: uncharacterized protein (432 aa).

The next 12 membrane-spanning stretches (helical) occupy residues 35-55 (VARV…VIYL), 60-80 (LPPA…IATG), 112-132 (VAGM…PLWS), 144-164 (VGLL…LGAL), 185-205 (LAVA…LWAA), 209-229 (AVAW…ASLL), 242-262 (AHSI…PVLL), 274-294 (GAVI…LSAM), 313-333 (LIAP…AAGL), 359-379 (AAAV…AAAL), 384-404 (LLGW…PMPL), and 408-428 (TVIA…AALA).

To M.tuberculosis Rv3630 and M.bovis Mb3654.

Its subcellular location is the cell membrane. This is an uncharacterized protein from Mycobacterium tuberculosis (strain CDC 1551 / Oshkosh).